Here is a 201-residue protein sequence, read N- to C-terminus: Acyl-homoserine-lactone synthase (201 aa).

It belongs to the autoinducer synthase family.

It catalyses the reaction a fatty acyl-[ACP] + S-adenosyl-L-methionine = an N-acyl-L-homoserine lactone + S-methyl-5'-thioadenosine + holo-[ACP] + H(+). In terms of biological role, required for the synthesis of BHL (N-butanoyl-L-homoserine lactone), and HHL (N-hexanoyl-L-homoserine lactone) autoinducer molecules which bind to RhlR and thus acts in elastase biosynthesis regulation. The protein is Acyl-homoserine-lactone synthase (rhlI) of Pseudomonas aeruginosa (strain ATCC 15692 / DSM 22644 / CIP 104116 / JCM 14847 / LMG 12228 / 1C / PRS 101 / PAO1).